Consider the following 163-residue polypeptide: Inorganic pyrophosphatase (163 aa).

Glu-9 is a binding site for Mg(2+). Substrate is bound by residues Lys-17, Arg-31, and Tyr-43. Mg(2+)-binding residues include Asp-53, Asp-58, Asp-85, and Asp-90. Asp-90 functions as the Proton acceptor in the catalytic mechanism. Tyr-127 contributes to the substrate binding site.

Belongs to the PPase family. As to quaternary structure, homohexamer. Mg(2+) is required as a cofactor.

Its subcellular location is the cytoplasm. It catalyses the reaction diphosphate + H2O = 2 phosphate + H(+). Its function is as follows. Catalyzes the hydrolysis of inorganic pyrophosphate (PPi) forming two phosphate ions. The sequence is that of Inorganic pyrophosphatase from Leifsonia xyli subsp. xyli (strain CTCB07).